Consider the following 406-residue polypeptide: Protein ALP1-like (406 aa).

Positions 8–15 (KKKKRAEK) match the Nuclear localization signal motif. In terms of domain architecture, DDE Tnp4 spans 187–353 (IDITHIVMNL…IIFVCCLLHN (167 aa)). Positions 188, 240, and 279 each coordinate a divalent metal cation.

Belongs to the HARBI1 family. It depends on a divalent metal cation as a cofactor.

The protein localises to the nucleus. Functionally, transposase-derived protein that may have nuclease activity. In Arabidopsis thaliana (Mouse-ear cress), this protein is Protein ALP1-like.